A 220-amino-acid polypeptide reads, in one-letter code: Deoxyribose-phosphate aldolase 1 (220 aa).

Asp89 acts as the Proton donor/acceptor in catalysis. Lys151 functions as the Schiff-base intermediate with acetaldehyde in the catalytic mechanism. Lys180 acts as the Proton donor/acceptor in catalysis.

It belongs to the DeoC/FbaB aldolase family. DeoC type 1 subfamily.

It localises to the cytoplasm. It carries out the reaction 2-deoxy-D-ribose 5-phosphate = D-glyceraldehyde 3-phosphate + acetaldehyde. It participates in carbohydrate degradation; 2-deoxy-D-ribose 1-phosphate degradation; D-glyceraldehyde 3-phosphate and acetaldehyde from 2-deoxy-alpha-D-ribose 1-phosphate: step 2/2. In terms of biological role, catalyzes a reversible aldol reaction between acetaldehyde and D-glyceraldehyde 3-phosphate to generate 2-deoxy-D-ribose 5-phosphate. The sequence is that of Deoxyribose-phosphate aldolase 1 from Mesoplasma florum (strain ATCC 33453 / NBRC 100688 / NCTC 11704 / L1) (Acholeplasma florum).